The chain runs to 422 residues: GTPase Obg (422 aa).

Residues 2-157 enclose the Obg domain; it reads AKFIDEIKLT…YLAHIVLKVM (156 aa). Residues 158–325 form the OBG-type G domain; that stretch reads SDVGIIGKPS…LKGKIWKILE (168 aa). Residues 164–171, 189–193, 210–213, 279–282, and 306–308 contribute to the GTP site; these read GKPSAGKS, FTTLV, DLPG, NKSD, and SAI. Mg(2+) contacts are provided by Ser-171 and Thr-191. Residues 334–420 enclose the OCT domain; the sequence is EEEETEENVE…ILDYEFEWDG (87 aa).

This sequence belongs to the TRAFAC class OBG-HflX-like GTPase superfamily. OBG GTPase family. Monomer. Mg(2+) is required as a cofactor.

It localises to the cytoplasm. Its function is as follows. An essential GTPase which binds GTP, GDP and possibly (p)ppGpp with moderate affinity, with high nucleotide exchange rates and a fairly low GTP hydrolysis rate. Plays a role in control of the cell cycle, stress response, ribosome biogenesis and in those bacteria that undergo differentiation, in morphogenesis control. This is GTPase Obg from Mycoplasmopsis agalactiae (strain NCTC 10123 / CIP 59.7 / PG2) (Mycoplasma agalactiae).